The primary structure comprises 206 residues: Thymidylate kinase (206 aa).

14 to 21 contributes to the ATP binding site; it reads GGEGIGKS.

This sequence belongs to the thymidylate kinase family.

The enzyme catalyses dTMP + ATP = dTDP + ADP. Phosphorylation of dTMP to form dTDP in both de novo and salvage pathways of dTTP synthesis. This Rickettsia bellii (strain RML369-C) protein is Thymidylate kinase.